Here is a 185-residue protein sequence, read N- to C-terminus: Large ribosomal subunit protein uL5m (185 aa).

It belongs to the universal ribosomal protein uL5 family.

The protein localises to the mitochondrion. The protein is Large ribosomal subunit protein uL5m (RPL5) of Brassica napus (Rape).